The chain runs to 238 residues: Succinate dehydrogenase iron-sulfur subunit (238 aa).

The 90-residue stretch at 8–97 (YRYNPDVDDA…KIVIRPLPGL (90 aa)) folds into the 2Fe-2S ferredoxin-type domain. Positions 55, 60, and 75 each coordinate [2Fe-2S] cluster. Residues 139-169 (QREKLDGLYECILCACCSTSCPSFWWNPDKF) form the 4Fe-4S ferredoxin-type domain. [4Fe-4S] cluster contacts are provided by Cys-149, Cys-152, and Cys-155. Cys-159 is a [3Fe-4S] cluster binding site. Residue Trp-164 participates in a ubiquinone binding. [3Fe-4S] cluster is bound by residues Cys-206 and Cys-212. [4Fe-4S] cluster is bound at residue Cys-216.

This sequence belongs to the succinate dehydrogenase/fumarate reductase iron-sulfur protein family. In terms of assembly, part of an enzyme complex containing four subunits: a flavoprotein, an iron-sulfur, cytochrome b-556, and a hydrophobic anchor protein. The complex forms trimers. The cofactor is [2Fe-2S] cluster. It depends on [3Fe-4S] cluster as a cofactor. Requires [4Fe-4S] cluster as cofactor.

Its subcellular location is the cell inner membrane. The catalysed reaction is a quinone + succinate = fumarate + a quinol. The protein operates within carbohydrate metabolism; tricarboxylic acid cycle; fumarate from succinate (bacterial route): step 1/1. Its function is as follows. Two distinct, membrane-bound, FAD-containing enzymes are responsible for the catalysis of fumarate and succinate interconversion; the fumarate reductase is used in anaerobic growth, and the succinate dehydrogenase is used in aerobic growth. The protein is Succinate dehydrogenase iron-sulfur subunit (sdhB) of Escherichia coli (strain K12).